A 947-amino-acid chain; its full sequence is Translation initiation factor IF-2 (947 aa).

Residues 69-353 (RRRKEVPQEE…TPKPQKKTEV (285 aa)) are disordered. The span at 81 to 108 (APPAAAEEPSSVDTAVAEEAPAEEVQPV) shows a compositional bias: low complexity. Positions 139–155 (PVVEEVIAEPAVEEVVE) are enriched in acidic residues. Basic and acidic residues-rich tracts occupy residues 215–226 (VTKEKPKVEKAT) and 246–262 (KRQERAKNGKGRPERPK). The segment covering 264 to 284 (AKPSGGPAPRAKEAAPQAAVP) has biased composition (low complexity). The span at 327 to 337 (QVYEPERDERR) shows a compositional bias: basic and acidic residues. A compositionally biased stretch (basic residues) spans 338–348 (MRRGKKTPKPQ). The 170-residue stretch at 447 to 616 (PRPPVVTIMG…LLQAEVLELK (170 aa)) folds into the tr-type G domain. The tract at residues 456–463 (GHVDHGKT) is G1. Residue 456–463 (GHVDHGKT) coordinates GTP. A G2 region spans residues 481 to 485 (GITQH). The segment at 502–505 (DTPG) is G3. GTP contacts are provided by residues 502–506 (DTPGH) and 556–559 (NKMD). The segment at 556–559 (NKMD) is G4. The G5 stretch occupies residues 592-594 (SAK).

It belongs to the TRAFAC class translation factor GTPase superfamily. Classic translation factor GTPase family. IF-2 subfamily.

The protein localises to the cytoplasm. In terms of biological role, one of the essential components for the initiation of protein synthesis. Protects formylmethionyl-tRNA from spontaneous hydrolysis and promotes its binding to the 30S ribosomal subunits. Also involved in the hydrolysis of GTP during the formation of the 70S ribosomal complex. In Syntrophotalea carbinolica (strain DSM 2380 / NBRC 103641 / GraBd1) (Pelobacter carbinolicus), this protein is Translation initiation factor IF-2.